Reading from the N-terminus, the 135-residue chain is UPF0355 protein SH2586 (135 aa).

The disordered stretch occupies residues 105 to 135; that stretch reads NSSHDEVEENNSAYEEIDITHYANESKGPKS.

Belongs to the UPF0355 family.

The protein is UPF0355 protein SH2586 of Staphylococcus haemolyticus (strain JCSC1435).